The following is a 123-amino-acid chain: Large ribosomal subunit protein uL29 (123 aa).

Belongs to the universal ribosomal protein uL29 family. In terms of assembly, component of the large ribosomal subunit.

It localises to the cytoplasm. In terms of biological role, component of the large ribosomal subunit. The ribosome is a large ribonucleoprotein complex responsible for the synthesis of proteins in the cell. The chain is Large ribosomal subunit protein uL29 (rpl35) from Xenopus tropicalis (Western clawed frog).